Here is a 447-residue protein sequence, read N- to C-terminus: GTPase Der (447 aa).

2 EngA-type G domains span residues 3 to 167 (PVIA…ALPE) and 180 to 353 (IRLA…KSAN). GTP is bound by residues 9-16 (GRPNVGKS), 56-60 (DTGGF), 119-122 (NKAE), 186-193 (GRPNVGKS), 233-237 (DTAGL), and 298-301 (NKWD). Residues 354–438 (RKMPTPVLTR…PLRIEMKTSS (85 aa)) form the KH-like domain.

This sequence belongs to the TRAFAC class TrmE-Era-EngA-EngB-Septin-like GTPase superfamily. EngA (Der) GTPase family. In terms of assembly, associates with the 50S ribosomal subunit.

In terms of biological role, GTPase that plays an essential role in the late steps of ribosome biogenesis. The protein is GTPase Der of Acidovorax ebreus (strain TPSY) (Diaphorobacter sp. (strain TPSY)).